Reading from the N-terminus, the 168-residue chain is uncharacterized protein (168 aa).

Disordered stretches follow at residues 1-35 (MGSS…KKLD), 48-97 (KVKK…DKGN), and 126-168 (ASIT…GLGM). Positions 29–95 (KEKKKLDEKE…KNSLSRSQDK (67 aa)) form a coiled coil. The segment covering 68–85 (LAEDPMVKNVAENDHDQM) has biased composition (basic and acidic residues). Residues 126–139 (ASITESSPSAQSNK) show a composition bias toward polar residues. Residues 140-150 (TNDKQREKELE) show a composition bias toward basic and acidic residues. The span at 157 to 168 (VLHKGTKKGLGM) shows a compositional bias: basic residues.

This is an uncharacterized protein from Schizosaccharomyces pombe (strain 972 / ATCC 24843) (Fission yeast).